Reading from the N-terminus, the 155-residue chain is Protein-export protein SecB (155 aa).

Belongs to the SecB family. As to quaternary structure, homotetramer, a dimer of dimers. One homotetramer interacts with 1 SecA dimer.

The protein resides in the cytoplasm. Its function is as follows. One of the proteins required for the normal export of preproteins out of the cell cytoplasm. It is a molecular chaperone that binds to a subset of precursor proteins, maintaining them in a translocation-competent state. It also specifically binds to its receptor SecA. The protein is Protein-export protein SecB of Escherichia fergusonii (strain ATCC 35469 / DSM 13698 / CCUG 18766 / IAM 14443 / JCM 21226 / LMG 7866 / NBRC 102419 / NCTC 12128 / CDC 0568-73).